The sequence spans 182 residues: Large ribosomal subunit protein uL5 (182 aa).

Belongs to the universal ribosomal protein uL5 family. As to quaternary structure, part of the 50S ribosomal subunit; part of the 5S rRNA/L5/L18/L25 subcomplex. Contacts the 5S rRNA and the P site tRNA. Forms a bridge to the 30S subunit in the 70S ribosome.

This is one of the proteins that bind and probably mediate the attachment of the 5S RNA into the large ribosomal subunit, where it forms part of the central protuberance. In the 70S ribosome it contacts protein S13 of the 30S subunit (bridge B1b), connecting the 2 subunits; this bridge is implicated in subunit movement. Contacts the P site tRNA; the 5S rRNA and some of its associated proteins might help stabilize positioning of ribosome-bound tRNAs. In Borrelia hermsii (strain HS1 / DAH), this protein is Large ribosomal subunit protein uL5.